The sequence spans 187 residues: NADH-quinone oxidoreductase subunit B (187 aa).

Residues Cys51, Cys52, Cys117, and Cys149 each contribute to the [4Fe-4S] cluster site.

Belongs to the complex I 20 kDa subunit family. As to quaternary structure, NDH-1 is composed of 14 different subunits. Subunits NuoB, C, D, E, F, and G constitute the peripheral sector of the complex. [4Fe-4S] cluster is required as a cofactor.

The protein resides in the cell inner membrane. It carries out the reaction a quinone + NADH + 5 H(+)(in) = a quinol + NAD(+) + 4 H(+)(out). NDH-1 shuttles electrons from NADH, via FMN and iron-sulfur (Fe-S) centers, to quinones in the respiratory chain. The immediate electron acceptor for the enzyme in this species is believed to be ubiquinone. Couples the redox reaction to proton translocation (for every two electrons transferred, four hydrogen ions are translocated across the cytoplasmic membrane), and thus conserves the redox energy in a proton gradient. This is NADH-quinone oxidoreductase subunit B from Nitratidesulfovibrio vulgaris (strain DSM 19637 / Miyazaki F) (Desulfovibrio vulgaris).